A 275-amino-acid polypeptide reads, in one-letter code: Bis(5'-nucleosyl)-tetraphosphatase, symmetrical (275 aa).

It belongs to the Ap4A hydrolase family.

It carries out the reaction P(1),P(4)-bis(5'-adenosyl) tetraphosphate + H2O = 2 ADP + 2 H(+). Hydrolyzes diadenosine 5',5'''-P1,P4-tetraphosphate to yield ADP. This is Bis(5'-nucleosyl)-tetraphosphatase, symmetrical from Stutzerimonas stutzeri (strain A1501) (Pseudomonas stutzeri).